The primary structure comprises 431 residues: Adenylosuccinate synthetase (431 aa).

Residues 12 to 18 (GDEGKGK) and 40 to 42 (GHT) contribute to the GTP site. The active-site Proton acceptor is the Asp13. Asp13 and Gly40 together coordinate Mg(2+). Residues 13–16 (DEGK), 38–41 (NAGH), Thr130, Arg144, Gln224, Thr239, and Arg303 contribute to the IMP site. His41 acts as the Proton donor in catalysis. 299–305 (STTGRPR) serves as a coordination point for substrate. GTP-binding positions include Arg305, 331–333 (KAD), and 413–415 (SIG).

It belongs to the adenylosuccinate synthetase family. Homodimer. It depends on Mg(2+) as a cofactor.

It is found in the cytoplasm. It carries out the reaction IMP + L-aspartate + GTP = N(6)-(1,2-dicarboxyethyl)-AMP + GDP + phosphate + 2 H(+). It participates in purine metabolism; AMP biosynthesis via de novo pathway; AMP from IMP: step 1/2. In terms of biological role, plays an important role in the de novo pathway of purine nucleotide biosynthesis. Catalyzes the first committed step in the biosynthesis of AMP from IMP. The sequence is that of Adenylosuccinate synthetase from Cytophaga hutchinsonii (strain ATCC 33406 / DSM 1761 / CIP 103989 / NBRC 15051 / NCIMB 9469 / D465).